A 791-amino-acid polypeptide reads, in one-letter code: MYKSLFFCLKILALLFLIGCGIVAYIIYYYSRDLPDYRQLARYYPPSVTRIYSRDGKLMEEYAFERRVFIPINSIPTSLKESFIAAEDKNFYNHQGVDLFGIVRAAFLNISNFLHHRRMEGASTITQQVVKNFLLTNEVSFQRKIKEAILSYMISRVFTKDQILELYLNQTFFGRGAYGVATAAQNYFNKSVEELTIAESAFIAALPKAPSELNPEKNYARVKARRDYVIMRMLEDGYITSDAAKEAVDSPITLRKRDQDETVTADYYAEQVRDEVIKMLGSKDEFYTSGLTIITSLDAKMQKFAEESLRKGLRDFDRKRGFRKAIATISLDNWQEELKKLPTTPSLLEYKIAVVLEVTDTQAEIGFASGAKSKIPISEMKWAKSELKSAKKLLTKGDVIVVEPVKDYYALRQIPEVNGAIMVMNPNTGQVLTSVGGYDFFASKFDRVTQALRQPGSLSKTFVYLAALENGVKPNQIFNDGPIEISQGPGMPSWRPKNYEGKFLGPITMRTGLEKSRNLVTVRVATAVGLTKIVDIIKRFGINDNPQKVYSMVLGSIETTLERITNAYGIIANGGKRIKPHFVELIKDRNGKVIYRRDDRECTTCNVSDNDLDNAILEIPAENIYMVTDAASDYQITSLLTGVVDRGTAYSAKKLGKVIGGKTGTSNDSKDTWFIGFTPKIVVGSYVGYDTPRTLGRRATGSSVVLPIFIDFMSNAYKDEPPLPFKVPDSVKLQAVDRATGQITPSGSVMEAFKINNILIIEDDSEIIDNNHNNDVFDYVPTEKDQSQEIY.

The Cytoplasmic segment spans residues 1–6 (MYKSLF). Residues 7–27 (FCLKILALLFLIGCGIVAYII) form a helical; Signal-anchor for type II membrane protein membrane-spanning segment. Topologically, residues 28-791 (YYYSRDLPDY…TEKDQSQEIY (764 aa)) are periplasmic. Residues 49-220 (TRIYSRDGKL…SELNPEKNYA (172 aa)) form a transglycosylase region. Glu87 functions as the Proton donor; for transglycosylase activity in the catalytic mechanism. A transpeptidase region spans residues 398 to 711 (DVIVVEPVKD…SSVVLPIFID (314 aa)). Catalysis depends on Ser457, which acts as the Acyl-ester intermediate; for transpeptidase activity.

In the N-terminal section; belongs to the glycosyltransferase 51 family. This sequence in the C-terminal section; belongs to the transpeptidase family.

Its subcellular location is the cell inner membrane. The catalysed reaction is [GlcNAc-(1-&gt;4)-Mur2Ac(oyl-L-Ala-gamma-D-Glu-L-Lys-D-Ala-D-Ala)](n)-di-trans,octa-cis-undecaprenyl diphosphate + beta-D-GlcNAc-(1-&gt;4)-Mur2Ac(oyl-L-Ala-gamma-D-Glu-L-Lys-D-Ala-D-Ala)-di-trans,octa-cis-undecaprenyl diphosphate = [GlcNAc-(1-&gt;4)-Mur2Ac(oyl-L-Ala-gamma-D-Glu-L-Lys-D-Ala-D-Ala)](n+1)-di-trans,octa-cis-undecaprenyl diphosphate + di-trans,octa-cis-undecaprenyl diphosphate + H(+). It catalyses the reaction Preferential cleavage: (Ac)2-L-Lys-D-Ala-|-D-Ala. Also transpeptidation of peptidyl-alanyl moieties that are N-acyl substituents of D-alanine.. Its pathway is cell wall biogenesis; peptidoglycan biosynthesis. Cell wall formation. Synthesis of cross-linked peptidoglycan from the lipid intermediates. The enzyme has a penicillin-insensitive transglycosylase N-terminal domain (formation of linear glycan strands) and a penicillin-sensitive transpeptidase C-terminal domain (cross-linking of the peptide subunits). The polypeptide is Penicillin-binding protein 1A (mrcA) (Rickettsia bellii (strain RML369-C)).